Consider the following 485-residue polypeptide: GTPase Der (485 aa).

2 EngA-type G domains span residues 3–167 (PTIA…PEPE) and 176–349 (PVFA…NAAM). Residues 9-16 (GRPNVGKS), 56-60 (DTGGF), 119-122 (NKGE), 182-189 (GRPNVGKS), 229-233 (DTAGV), and 294-297 (NKWD) contribute to the GTP site. Residues 350–434 (IKMPTPKITR…PLRIQYNVSE (85 aa)) enclose the KH-like domain. The interval 435-485 (NPYENAEDKPKKKPLRRVSLSNRIEKREGRKEEKNRFKKKTKVSVKKQFSK) is disordered. Over residues 457 to 469 (RIEKREGRKEEKN) the composition is skewed to basic and acidic residues. The segment covering 470-485 (RFKKKTKVSVKKQFSK) has biased composition (basic residues).

It belongs to the TRAFAC class TrmE-Era-EngA-EngB-Septin-like GTPase superfamily. EngA (Der) GTPase family. In terms of assembly, associates with the 50S ribosomal subunit.

Functionally, GTPase that plays an essential role in the late steps of ribosome biogenesis. In Neisseria meningitidis serogroup B (strain ATCC BAA-335 / MC58), this protein is GTPase Der.